The sequence spans 629 residues: Polyadenylate-binding protein, cytoplasmic and nuclear (629 aa).

Polar residues predominate over residues 1-11 (MSAAETNQLQE). The tract at residues 1–48 (MSAAETNQLQESMEKLNIGSTTEEQSAAAATTTADQSAEEQGESSGVA) is disordered. Residues 20 to 36 (STTEEQSAAAATTTADQ) show a composition bias toward low complexity. RRM domains are found at residues 52–130 (ASLY…WSQR), 140–217 (GNIF…KHIS), 233–310 (TNIY…RAQK), and 336–413 (VNLF…LAQR). Positions 503–534 (PPQFQQDFNGQNMRPQQQQQQQPRGGYYPNRN) are disordered. Polar residues predominate over residues 505 to 517 (QFQQDFNGQNMRP). Residues 537–618 (SKRDLAAIIS…ALTAFEEYKK (82 aa)) form the PABC domain.

It belongs to the polyadenylate-binding protein type-1 family.

Its subcellular location is the cytoplasm. The protein resides in the nucleus. Its function is as follows. Binds the poly(A) tail of mRNA. Appears to be an important mediator of the multiple roles of the poly(A) tail in mRNA biogenesis, stability and translation. In the nucleus, involved in both mRNA cleavage and polyadenylation. Is also required for efficient mRNA export to the cytoplasm. Acts in concert with a poly(A)-specific nuclease (PAN) to affect poly(A) tail shortening, which may occur concomitantly with either nucleocytoplasmic mRNA transport or translational initiation. In the cytoplasm, stimulates translation initiation and regulates mRNA decay through translation termination-coupled poly(A) shortening, probably mediated by PAN. The sequence is that of Polyadenylate-binding protein, cytoplasmic and nuclear (PAB1) from Candida albicans (strain SC5314 / ATCC MYA-2876) (Yeast).